Reading from the N-terminus, the 837-residue chain is MALEQAMQAARRGDLDVLRSLHAAGLLGPSLRDPLDALPVHHAARSGKLHCLRYLVEEVALPAVSRARNGATPAHDAAATGYLSCLQWLLTQGGCRVQEKDNSGATVLHLAARFGHPDVVNWLLYQGGANSAITTDTGALPIHYAAAKGDLPSMKLLVGHYPEGVNAQTNNGATPLYLACQEGHLEVTKYLVQECSADPHLRAQDGMTPLHAAAQMGHNPVLVWLVSFADVSFEQDHDGATAMHFAASRGHTKVLSWLLLHGAEISQDLWGGTPLHDAAENGELECCQILAVNGAGLDVRDHDGYTAADLADFNGHTHCSRYLRTVQTLSLEHRVLSRDPSMDLEAKQPDSGMSSPNTTMSVQPPNFDLGSPTSTLSNYDSCSSSHSSSKGQRSTRGARSSDLQSYMDMLNPEPRSKQGKPSSLPPPPPPSFPPPPPPGTQLPPPPPGYPAPNPPVGLHLDNIYMQTKNKLRHVEVDSLKKEPSSGDGYSGLRRQDSGLLRQDSELLLRHNTGLRRQDSDRKQRSFSKQPSTGDYYRQLGRSPGEPLAARPGMAHSEEAALLPGNHVHNGCSADSKASRELPPPPPPPPLPEALSSPPPAPPLPIEGAGAACGQRRSSSSTGSTKSFNMMSPTGDNSELLAEIKAGKSLKPTPQSKGLTTVFSGSGQPASQPESPQPAVSPGPSRARSPTPPASGPQPLLNGSIVPAPPATLAPGVHLDVEALIPTLDEQGRPIPEWKRQVMVRKLQQKMQEEEEQRRKEEEEEARLASLPAWRRDILRKKLEEEREQKRKEEERQKLEEIQRAKEQSEKLRTLGYDEAKLAPWQRQVILKKGEIPK.

ANK repeat units follow at residues 1-31 (MALE…GPSL), 35-66 (LDAL…AVSR), 69-99 (NGAT…RVQE), 103-132 (SGAT…ANSA), 137-167 (TGAL…GVNA), 171-201 (NGAT…DPHL), 205-235 (DGMT…SFEQ), 238-267 (DGAT…EISQ), and 270-299 (WGGT…GLDV). Residues serine 337 and serine 341 each carry the phosphoserine modification. A compositionally biased stretch (basic and acidic residues) spans 339–348 (DPSMDLEAKQ). Disordered stretches follow at residues 339-459 (DPSM…VGLH), 477-712 (DSLK…PATL), 745-767 (KLQQ…EARL), and 785-816 (EREQ…TLGY). Over residues 351-364 (SGMSSPNTTMSVQP) the composition is skewed to polar residues. The segment covering 376–395 (LSNYDSCSSSHSSSKGQRST) has biased composition (low complexity). A phosphoserine mark is found at serine 400 and serine 401. Pro residues predominate over residues 423-455 (SLPPPPPPSFPPPPPPGTQLPPPPPGYPAPNPP). A phosphoserine mark is found at serine 497, serine 504, and serine 531. Positions 581–604 (LPPPPPPPPLPEALSSPPPAPPLP) are enriched in pro residues. The segment covering 617–626 (SSSSTGSTKS) has biased composition (low complexity). Composition is skewed to polar residues over residues 627 to 636 (FNMMSPTGDN) and 651 to 662 (PTPQSKGLTTVF). Serine 631 bears the Phosphoserine mark. Residues 635-652 (DNSELLAEIKAGKSLKPT) enclose the WH2 domain. Residues 663 to 673 (SGSGQPASQPE) show a composition bias toward low complexity. A phosphoserine mark is found at serine 670, serine 674, and serine 680. Residues 738-814 (KRQVMVRKLQ…KEQSEKLRTL (77 aa)) are a coiled coil.

As to quaternary structure, monomer. Interacts with PFN2. Binds F-actin in a Ca(2+)-resistant fashion. Interacts (via N-terminal) with BAIAP2 (via SH3-domain). Interacts with MYO3A (via C-terminus). Interacts with MYO3B (via C-terminus). Expressed at high concentration in the microvillar parallel actin bundle (PAB) of hair cells stereocilia in the cochlea and vestibular system. Detected also at high levels of a number of other sensory cell types, including taste receptor cells, solitary chemoreceptor cells, vomeronasal sensory neurons and Merkel cells. Isoform 1 is detected in testis. Isoforms 2 is detected in small intestine and kidney (at protein level). Isoforms 3, 4, 6 and 8 are expressed in Purkinje cells dendritic spines.

The protein localises to the cytoplasm. The protein resides in the cytoskeleton. It is found in the cell projection. Its subcellular location is the stereocilium. It localises to the microvillus. The protein localises to the cell junction. The protein resides in the dendritic spine. In terms of biological role, multifunctional actin-bundling protein. Plays a major role in regulating the organization, dimension, dynamics and signaling capacities of the actin filament-rich microvilli in the mechanosensory and chemosensory cells. Required for the assembly and stabilization of the stereociliary parallel actin bundles. Plays a crucial role in the formation and maintenance of inner ear hair cell stereocilia. Involved in the elongation of actin in stereocilia. In extrastriolar hair cells, required for targeting MYO3B to stereocilia tips, and for regulation of stereocilia diameter and staircase formation. The chain is Espin (Espn) from Rattus norvegicus (Rat).